Consider the following 194-residue polypeptide: dTTP/UTP pyrophosphatase (194 aa).

D77 (proton acceptor) is an active-site residue.

This sequence belongs to the Maf family. YhdE subfamily. A divalent metal cation serves as cofactor.

The protein resides in the cytoplasm. The catalysed reaction is dTTP + H2O = dTMP + diphosphate + H(+). It catalyses the reaction UTP + H2O = UMP + diphosphate + H(+). Functionally, nucleoside triphosphate pyrophosphatase that hydrolyzes dTTP and UTP. May have a dual role in cell division arrest and in preventing the incorporation of modified nucleotides into cellular nucleic acids. The chain is dTTP/UTP pyrophosphatase from Flavobacterium johnsoniae (strain ATCC 17061 / DSM 2064 / JCM 8514 / BCRC 14874 / CCUG 350202 / NBRC 14942 / NCIMB 11054 / UW101) (Cytophaga johnsonae).